Consider the following 142-residue polypeptide: Large ribosomal subunit protein uL13c (142 aa).

The protein belongs to the universal ribosomal protein uL13 family. In terms of assembly, part of the 50S ribosomal subunit.

It is found in the plastid. The protein localises to the chloroplast. The sequence is that of Large ribosomal subunit protein uL13c from Porphyra purpurea (Red seaweed).